A 129-amino-acid polypeptide reads, in one-letter code: GEL complex subunit OPTI (129 aa).

Topologically, residues 1–44 (MSGGRRKEEPPQPQLANGALKVSVWSKVLRSDAAWEDKDEFLDV) are cytoplasmic. The chain crosses the membrane as a helical span at residues 45-65 (IYWFRQIIAVVLGVIWGVLPL). Residue Arg-66 is a topological domain, lumenal. The chain crosses the membrane as a helical span at residues 67 to 84 (GFLGIAGFCVINAGVLYL). Residues 85 to 103 (YFSNYLQIDEEEYGGTWEL) lie on the Cytoplasmic side of the membrane. A helical transmembrane segment spans residues 104–127 (TKEGFMTSFALFMVIWIIFYTAIH). The Lumenal segment spans residues 128 to 129 (YD).

This sequence belongs to the EMC6 family. Component of the GET- and EMC-like (GEL) complex, composed of RAB5IF/OPTI and TMCO1. The GEL complex is part of the multi-pass translocon (MPT) complex, composed of three subcomplexes, the GEL complex (composed of RAB5IF/OPTI and TMCO1), the BOS complex (composed of NCLN/Nicalin, NOMO1 and TMEM147) and the PAT complex (composed of WDR83OS/Asterix and CCDC47). The MPT complex associates with the SEC61 complex. Interacts with NDUFS3, NDUFA4, NDUFV1, NDUFA9 and NDUFS8 of the mitochondrial membrane respiratory chain NADH dehydrogenase (Complex I). Interacts with UQCRC2 of the ubiquinol-cytochrome c reductase complex (Complex III). Interacts with COX5A and COX7C of the cytochrome c oxidase complex (Complex IV).

The protein resides in the endoplasmic reticulum membrane. Its subcellular location is the mitochondrion inner membrane. Its function is as follows. Component of the multi-pass translocon (MPT) complex that mediates insertion of multi-pass membrane proteins into the lipid bilayer of membranes. The MPT complex takes over after the SEC61 complex: following membrane insertion of the first few transmembrane segments of proteins by the SEC61 complex, the MPT complex occludes the lateral gate of the SEC61 complex to promote insertion of subsequent transmembrane regions. Within the MPT complex, the GEL subcomplex may mediate insertion of transmembrane regions into the membrane. In addition to its role in multi-pass membrane insertion, RAB5IF/OPTI also acts as an assembly factor for mitochondrial respiratory complexes. This is GEL complex subunit OPTI (RAB5IF) from Canis lupus familiaris (Dog).